Here is a 135-residue protein sequence, read N- to C-terminus: uncharacterized protein (135 aa).

The interval 56 to 135 is disordered; that stretch reads VQSHNRGINN…QKGQLKIEKV (80 aa). The span at 64 to 74 shows a compositional bias: basic residues; sequence NNRRRDQKRKQ. Polar residues predominate over residues 77–89; the sequence is SIKQDNDLNVSSE. Basic and acidic residues predominate over residues 108-135; the sequence is YKETPDLDEPGSREKRVSQKGQLKIEKV.

This is an uncharacterized protein from Schizosaccharomyces pombe (strain 972 / ATCC 24843) (Fission yeast).